A 366-amino-acid chain; its full sequence is tRNA (guanine(26)-N(2))-dimethyltransferase (366 aa).

Residues 1 to 28 form a disordered region; the sequence is MEVSEGSVTVEVPEERHGASEGSGEGVF. The 365-residue stretch at 1 to 365 folds into the Trm1 methyltransferase domain; the sequence is MEVSEGSVTV…ADVADIRNAV (365 aa). Residues Arg-37, Arg-64, and Asp-79 each contribute to the S-adenosyl-L-methionine site. Residues Cys-234, Cys-237, Cys-254, and Cys-257 each coordinate Zn(2+).

Belongs to the class I-like SAM-binding methyltransferase superfamily. Trm1 family.

The enzyme catalyses guanosine(26) in tRNA + 2 S-adenosyl-L-methionine = N(2)-dimethylguanosine(26) in tRNA + 2 S-adenosyl-L-homocysteine + 2 H(+). In terms of biological role, dimethylates a single guanine residue at position 26 of a number of tRNAs using S-adenosyl-L-methionine as donor of the methyl groups. This chain is tRNA (guanine(26)-N(2))-dimethyltransferase, found in Natronomonas pharaonis (strain ATCC 35678 / DSM 2160 / CIP 103997 / JCM 8858 / NBRC 14720 / NCIMB 2260 / Gabara) (Halobacterium pharaonis).